A 733-amino-acid polypeptide reads, in one-letter code: Centrosomal protein of 68 kDa (733 aa).

The span at 71–80 (SKEPVADRSK) shows a compositional bias: basic and acidic residues. Disordered regions lie at residues 71–92 (SKEP…SASV), 150–207 (GLSQ…SFAN), and 222–244 (VVGA…DATG). Residues 178 to 190 (SSRSISASSVGSS) are compositionally biased toward low complexity. Polar residues predominate over residues 231–241 (GSAQPLTSGSD). Ser315 bears the Phosphoserine mark. Positions 420-442 (PQLKTKEKEPPFPRQKRGRQHVS) are disordered. 2 positions are modified to phosphoserine: Ser453 and Ser459. The segment at 497–571 (HSSLQVSDSD…KPLKTQPASK (75 aa)) is disordered. Residues 540–569 (IQPQDSRGKSSLMSNQTLGVSSKPLKTQPA) are compositionally biased toward polar residues.

In terms of assembly, interacts with CNTLN; the interaction recruits CEP68 to the centrosome. Interacts with the SCF(FBXW11) complex which contains SKP1, CUL1 and FBXW11; the interaction is probably mediated by FBXW11 and the complex also contains CDK5RAP2 and PCNT. Also interacts with F-box protein BTRC. Interacts with serine/threonine-protein kinase PLK1; the interaction leads to phosphorylation of CEP68 and its subsequent degradation. Interacts with NEK2; the interaction leads to phosphorylation of CEP68. In terms of processing, phosphorylation by PLK1 is required for binding to BTRC in prometaphase. Phosphorylated directly or indirectly by NEK2. NEK2-mediated phosphorylation promotes CEP68 dissociation from the centrosome and its degradation at the onset of mitosis. Ubiquitinated and targeted for proteasomal degradation in early mitosis by the SCF(BTRC) and/or SCF(FBXW11) E3 ubiquitin-protein ligase complexes. Degradation is complete by prometaphase and is required for removal of CDK5RAP2 from the peripheral pericentriolar material and subsequent centriole separation.

It is found in the cytoplasm. The protein localises to the cytoskeleton. It localises to the microtubule organizing center. Its subcellular location is the centrosome. Functionally, involved in maintenance of centrosome cohesion, probably as part of a linker structure which prevents centrosome splitting. Required for localization of CDK5RAP2 to the centrosome during interphase. Contributes to CROCC/rootletin filament formation. The sequence is that of Centrosomal protein of 68 kDa (Cep68) from Mus musculus (Mouse).